The following is a 461-amino-acid chain: Photosystem II CP43 reaction center protein (461 aa).

The propeptide occupies 1 to 2 (ME). Thr3 carries the post-translational modification N-acetylthreonine. The residue at position 3 (Thr3) is a Phosphothreonine. 5 consecutive transmembrane segments (helical) span residues 57-81 (LFEVAHFVPEKPMYEQGLILLPHIA), 122-143 (LIGPETLEESFPFFGYIWKDKN), 166-188 (KAMYFGGVYDTWAAGGGDVRIIS), 243-263 (KPWGWARRAFVWSGEAYLSYS), and 279-300 (WFNNTAYPSEFYGPTGPEASQA). Glu355 serves as a coordination point for [CaMn4O5] cluster. A helical membrane pass occupies residues 435 to 459 (RARAAAAGFEKGIDRDTEPVLSMKP).

This sequence belongs to the PsbB/PsbC family. PsbC subfamily. PSII is composed of 1 copy each of membrane proteins PsbA, PsbB, PsbC, PsbD, PsbE, PsbF, PsbH, PsbI, PsbJ, PsbK, PsbL, PsbM, PsbT, PsbX, PsbY, PsbZ, Psb30/Ycf12, at least 3 peripheral proteins of the oxygen-evolving complex and a large number of cofactors. It forms dimeric complexes. Requires Binds multiple chlorophylls and provides some of the ligands for the Ca-4Mn-5O cluster of the oxygen-evolving complex. It may also provide a ligand for a Cl- that is required for oxygen evolution. PSII binds additional chlorophylls, carotenoids and specific lipids. as cofactor.

It is found in the plastid. Its subcellular location is the chloroplast thylakoid membrane. Its function is as follows. One of the components of the core complex of photosystem II (PSII). It binds chlorophyll and helps catalyze the primary light-induced photochemical processes of PSII. PSII is a light-driven water:plastoquinone oxidoreductase, using light energy to abstract electrons from H(2)O, generating O(2) and a proton gradient subsequently used for ATP formation. The polypeptide is Photosystem II CP43 reaction center protein (Oltmannsiellopsis viridis (Marine flagellate)).